A 622-amino-acid chain; its full sequence is Mitochondrial distribution and morphology protein 32 (622 aa).

The N-terminal 70 residues, 1–70 (MLITRLRVPT…RTFPSNDKFT (70 aa)), are a transit peptide targeting the mitochondrion. Residues 71–123 (TKASNIETILLRKNNEREFKQSLLADAKNFQERFKINLKWILIKNNRPFSLNE) are Mitochondrial matrix-facing. The chain crosses the membrane as a helical span at residues 124-144 (ISIIASWLILSQILWLILSTT). Residues 145–601 (TFISFYLFVI…DWEFKNKNDW (457 aa)) lie on the Mitochondrial intermembrane side of the membrane. Residues 602 to 622 (MKQWGTTFASQLLLFGFGAMV) traverse the membrane as a helical segment.

It belongs to the MDM31/MDM32 family. In terms of assembly, interacts with MDM31. Participates in a complex of about 175 kDa.

Its subcellular location is the mitochondrion inner membrane. Its function is as follows. Involved in the organization of the mitochondrial membranes and the global structure of the mitochondria. Also required for mitochondrial distribution and mobility as well as for the maintenance of mitochondrial DNA nucleoids structures. The protein is Mitochondrial distribution and morphology protein 32 (MDM32) of Saccharomyces cerevisiae (strain ATCC 204508 / S288c) (Baker's yeast).